Reading from the N-terminus, the 105-residue chain is ATP-dependent Clp protease adapter protein ClpS (105 aa).

Belongs to the ClpS family. In terms of assembly, binds to the N-terminal domain of the chaperone ClpA.

In terms of biological role, involved in the modulation of the specificity of the ClpAP-mediated ATP-dependent protein degradation. The chain is ATP-dependent Clp protease adapter protein ClpS from Streptomyces avermitilis (strain ATCC 31267 / DSM 46492 / JCM 5070 / NBRC 14893 / NCIMB 12804 / NRRL 8165 / MA-4680).